Consider the following 433-residue polypeptide: GTPase Obg (433 aa).

Residues 1 to 159 form the Obg domain; it reads MAFRDVLDIE…RRVRLELRLI (159 aa). One can recognise an OBG-type G domain in the interval 160–327; sequence ADVGLVGYPN…LRQALFDLLP (168 aa). ATP contacts are provided by residues 166 to 173, 191 to 195, 214 to 217, 280 to 283, and 308 to 310; these read GYPNAGKS, FTTLS, DIPG, NKIE, and SAK. Mg(2+) is bound by residues S173 and T193. Positions 342-430 constitute an OCT domain; it reads PEEVREEPLT…IGSFRFEYYA (89 aa).

Belongs to the TRAFAC class OBG-HflX-like GTPase superfamily. OBG GTPase family. As to quaternary structure, monomer. Mg(2+) serves as cofactor.

It localises to the cytoplasm. Its function is as follows. An essential GTPase which binds GTP, GDP and possibly (p)ppGpp with moderate affinity, with high nucleotide exchange rates and a fairly low GTP hydrolysis rate. Plays a role in control of the cell cycle, stress response, ribosome biogenesis and in those bacteria that undergo differentiation, in morphogenesis control. This chain is GTPase Obg, found in Deinococcus geothermalis (strain DSM 11300 / CIP 105573 / AG-3a).